A 525-amino-acid chain; its full sequence is Beta-1,4-xylosyltransferase IRX14 (525 aa).

The Cytoplasmic portion of the chain corresponds to 1-35 (MKLSALHQSYLNRRSNSFRSPTSLDSSVDGSGKSL). A helical; Signal-anchor for type II membrane protein membrane pass occupies residues 36 to 56 (IAVFWLILHCLCCLISLVLGF). Topologically, residues 57-525 (RFSRLVFFFL…SSSSKHQERN (469 aa)) are lumenal. N-linked (GlcNAc...) asparagine glycosylation is found at Asn-102, Asn-204, and Asn-326. The segment at 452–525 (RTPWPDVPPE…SSSSKHQERN (74 aa)) is disordered. The segment covering 471 to 488 (PLSQGNTVVVIPKQQQHP) has biased composition (polar residues). Positions 489 to 503 (TKIRKPKRKSKKSKH) are enriched in basic residues. Polar residues predominate over residues 508-519 (TDTTTQVYSSSS).

It belongs to the glycosyltransferase 43 family. As to expression, expressed in developing interfascicular fibers and xylem cells in stems and developing secondary xylem in roots.

The protein localises to the golgi apparatus membrane. The enzyme catalyses [(1-&gt;4)-beta-D-xylan](n) + UDP-alpha-D-xylose = [(1-&gt;4)-beta-D-xylan](n+1) + UDP + H(+). Functionally, involved in the synthesis of the hemicellulose glucuronoxylan, a major component of secondary cell walls. Involved in the elongation of glucuronoxylan xylosyl backbone. Xylan xylosyltransferase that acts cooperatively with IRX9 to achieve the successive addition of xylosyl residues during xylan backbone elongation. Required for the proper composition and structural properties of released seed coat mucilage. Required for the production of highly branched xylan polymers in seed coat mucilage. Xylan with xylose side chains seems to be necessary for pectin attachment to the seed surface. Together with MUCI70, required for xylan and pectin synthesis in seed coat epidermal (SCE) cells. The protein is Beta-1,4-xylosyltransferase IRX14 of Arabidopsis thaliana (Mouse-ear cress).